We begin with the raw amino-acid sequence, 436 residues long: Probable mediator of RNA polymerase II transcription subunit 26b (436 aa).

The tract at residues 71 to 111 (PGDDEANRGTTGNGGGGTAVDEDYEVAGGSKESKANSSRGD) is disordered. Residues 139–214 (KEVARIKEIL…AEWKELVDQW (76 aa)) enclose the TFIIS N-terminal domain. Residues 263-376 (HFFDSLDFDG…PQQEKLKGLD (114 aa)) form a disordered region. Composition is skewed to basic and acidic residues over residues 276–290 (NSEE…ERRP) and 332–350 (TEQR…EKPM). Positions 382–402 (EFAKRKLQESYQHHENAKKQR) form a coiled coil. Residues 408-436 (EMIPKQGSAQKPQLKRPGMSNRNWANGRK) form a disordered region. Residues 427 to 436 (SNRNWANGRK) show a composition bias toward polar residues.

This sequence belongs to the Mediator complex subunit 26 family. As to quaternary structure, component of the Mediator complex.

Its subcellular location is the nucleus. Its function is as follows. Component of the Mediator complex, a coactivator involved in the regulated transcription of nearly all RNA polymerase II-dependent genes. Mediator functions as a bridge to convey information from gene-specific regulatory proteins to the basal RNA polymerase II transcription machinery. The Mediator complex, having a compact conformation in its free form, is recruited to promoters by direct interactions with regulatory proteins and serves for the assembly of a functional preinitiation complex with RNA polymerase II and the general transcription factors. May play a role in transcription elongation. This is Probable mediator of RNA polymerase II transcription subunit 26b (MED26B) from Arabidopsis thaliana (Mouse-ear cress).